The sequence spans 147 residues: Acidic phospholipase A2 S9-53F (147 aa).

Positions 1–19 (MYPAHLLVLLAVCVSLLGA) are cleaved as a signal peptide. The propeptide occupies 20–27 (SDIPPQPL). 7 cysteine pairs are disulfide-bonded: Cys38-Cys99, Cys54-Cys146, Cys56-Cys72, Cys71-Cys127, Cys78-Cys120, Cys88-Cys113, and Cys106-Cys118. The Ca(2+) site is built by Tyr55, Gly57, and Gly59. Residue His75 is part of the active site. Asp76 is a binding site for Ca(2+). The active site involves Asp121.

It belongs to the phospholipase A2 family. Group I subfamily. D49 sub-subfamily. It depends on Ca(2+) as a cofactor. Expressed by the venom gland.

The protein resides in the secreted. The enzyme catalyses a 1,2-diacyl-sn-glycero-3-phosphocholine + H2O = a 1-acyl-sn-glycero-3-phosphocholine + a fatty acid + H(+). Functionally, snake venom phospholipase A2 (PLA2) that inhibits collagen-induced platelet aggregation. PLA2 catalyzes the calcium-dependent hydrolysis of the 2-acyl groups in 3-sn-phosphoglycerides. The protein is Acidic phospholipase A2 S9-53F of Austrelaps superbus (Lowland copperhead snake).